We begin with the raw amino-acid sequence, 2271 residues long: Serine-rich adhesin for platelets (2271 aa).

The signal sequence occupies residues 1–89; it reads MSKRQKAFHD…VNMLHDQQAF (89 aa). The serine-rich repeat region 1, SRR1 stretch occupies residues 90-230; the sequence is AASDAPLTSE…KTSTTSTSTA (141 aa). Over residues 100–111 the composition is skewed to polar residues; it reads LNTQSETVGNQN. A disordered region spans residues 100–229; the sequence is LNTQSETVGN…NKTSTTSTST (130 aa). Residues 112 to 128 show a composition bias toward low complexity; it reads STTIEASTSTADSTSVT. Over residues 129–140 the composition is skewed to polar residues; sequence KNSSSVQTSNSD. A compositionally biased stretch (low complexity) spans 150–229; that stretch reads VTSTTNSTSN…NKTSTTSTST (80 aa). Residues 231 to 751 form a non-repeat region (NRR) region; it reads PVKLRTFSRL…TTFKYEVTRN (521 aa). Positions 245–491 are L-lectin module; sequence FASAATTTAV…QQVQFGTFEY (247 aa). Residues Asp365, Tyr367, Asn369, and Asp382 each contribute to the Ca(2+) site. The beta-grasp module stretch occupies residues 492-571; it reads TESAVTQVRY…NAGQSVTYYF (80 aa). The segment at 572–659 is cadherin-like module-1; the sequence is TDVKAPTVTV…KSTTTFTINV (88 aa). Positions 573, 575, 601, 602, 645, 661, 663, 690, 691, and 734 each coordinate Ca(2+). The segment at 660–751 is cadherin-like module-2; sequence VDTTAPTVTP…TTFKYEVTRN (92 aa). Disordered regions lie at residues 751–791 and 806–2242; these read NSMS…VVST and SVSA…NGLL. Low complexity-rich tracts occupy residues 752–791, 806–1392, and 1402–2214; these read SMSD…VVST, SVSA…LSLS, and SNSA…ATSE. The tract at residues 752–2232 is serine-rich repeat region 2, SRR2; that stretch reads SMSDSVSTSG…AQSEKRLPDT (1481 aa). Positions 2229–2233 match the LPXTG sorting signal motif; that stretch reads LPDTG. Pentaglycyl murein peptidoglycan amidated threonine is present on Thr2232. Residues 2233-2271 constitute a propeptide, removed by sortase; sequence GDSIKQNGLLGGVMTLLVGLGLMKRKKKKDENDQDDSQA.

The protein belongs to the serine-rich repeat protein (SRRP) family. Proteolytically cleaved by a metalloprotease. Post-translationally, glycosylated. It is probable that most of the Ser residues in SSR1 and SSR2 are O-GlcNAcylated. Sequential glycosylation by sugar transferases are able to generate complex sugar polymorphisms.

It is found in the secreted. The protein localises to the cell wall. In terms of biological role, mediates binding to human platelets, possibly through a receptor-ligand interaction. Probably associated with virulence in endovascular infection. Plays a positive role in biofilm formation, possibly by self-association via the non-repeat region (NRR or binding region, BR). Binds to and plays a role in human lung epithelial cell invasion via the L-lectin module of its NRR domain; N-acetylneuraminic acid (Neu5Ac) inhibits binding. Treatment of host cells with neuraminidase decreases adherence of S.aureus cells, suggesting SraP recognizes a host terminal Neu5Ac moiety as a receptor. The sequence is that of Serine-rich adhesin for platelets from Staphylococcus aureus (strain NCTC 8325 / PS 47).